Here is a 390-residue protein sequence, read N- to C-terminus: Putative nickel insertion protein (390 aa).

Belongs to the LarC family.

The polypeptide is Putative nickel insertion protein (Geotalea uraniireducens (strain Rf4) (Geobacter uraniireducens)).